Here is a 342-residue protein sequence, read N- to C-terminus: CMP-N-acetylneuraminate-beta-galactosamide-alpha-2,3-sialyltransferase 1 (342 aa).

Topologically, residues 1-10 (MVTVRKRNVK) are cytoplasmic. Residues 11–28 (VFTFAFVLITVTSFLLNY) form a helical; Signal-anchor for type II membrane protein membrane-spanning segment. Over 29–342 (KHQVTMTTWD…IEKIKFFKGR (314 aa)) the chain is Lumenal. 3 disulfides stabilise this stretch: Cys61–Cys66, Cys63–Cys141, and Cys144–Cys283. Asn81 is a glycosylation site (N-linked (GlcNAc...) asparagine). Position 107 (Gln107) interacts with substrate. An N-linked (GlcNAc...) asparagine glycan is attached at Asn116. 2 residues coordinate substrate: Asn149 and Asn172. Asn203 and Asn229 each carry an N-linked (GlcNAc...) asparagine glycan. The substrate site is built by Tyr232, Tyr268, Gly272, Gly292, and His301. Asn306 carries an N-linked (GlcNAc...) asparagine glycan. His318 provides a ligand contact to substrate. The N-linked (GlcNAc...) asparagine glycan is linked to Asn325.

This sequence belongs to the glycosyltransferase 29 family. In terms of processing, the soluble form derives from the membrane form by proteolytic processing.

It is found in the golgi apparatus. The protein resides in the golgi stack membrane. The protein localises to the secreted. It catalyses the reaction a beta-D-galactosyl-(1-&gt;3)-N-acetyl-alpha-D-galactosaminyl derivative + CMP-N-acetyl-beta-neuraminate = an N-acetyl-alpha-neuraminyl-(2-&gt;3)-beta-D-galactosyl-(1-&gt;3)-N-acetyl-alpha-D-galactosaminyl derivative + CMP + H(+). The protein operates within protein modification; protein glycosylation. In terms of biological role, responsible for the synthesis of the sequence NeuAc-alpha-2,3-Gal-beta-1,3-GalNAc- found on sugar chains O-linked to Thr or Ser and also as a terminal sequence on certain gangliosides. SIAT4A and SIAT4B sialylate the same acceptor substrates but exhibit different Km values. The sequence is that of CMP-N-acetylneuraminate-beta-galactosamide-alpha-2,3-sialyltransferase 1 (ST3GAL1) from Gallus gallus (Chicken).